Reading from the N-terminus, the 288-residue chain is 4-hydroxy-3-methylbut-2-enyl diphosphate reductase (288 aa).

Cys13 provides a ligand contact to [4Fe-4S] cluster. (2E)-4-hydroxy-3-methylbut-2-enyl diphosphate-binding residues include His41 and His75. 2 residues coordinate dimethylallyl diphosphate: His41 and His75. His41 and His75 together coordinate isopentenyl diphosphate. Cys97 lines the [4Fe-4S] cluster pocket. His130 provides a ligand contact to (2E)-4-hydroxy-3-methylbut-2-enyl diphosphate. A dimethylallyl diphosphate-binding site is contributed by His130. His130 contributes to the isopentenyl diphosphate binding site. Glu132 acts as the Proton donor in catalysis. Thr168 contributes to the (2E)-4-hydroxy-3-methylbut-2-enyl diphosphate binding site. Cys199 provides a ligand contact to [4Fe-4S] cluster. Residues Ser227, Ser228, Asn229, and Ser271 each contribute to the (2E)-4-hydroxy-3-methylbut-2-enyl diphosphate site. Dimethylallyl diphosphate contacts are provided by Ser227, Ser228, Asn229, and Ser271. Residues Ser227, Ser228, Asn229, and Ser271 each coordinate isopentenyl diphosphate.

This sequence belongs to the IspH family. [4Fe-4S] cluster serves as cofactor.

The enzyme catalyses isopentenyl diphosphate + 2 oxidized [2Fe-2S]-[ferredoxin] + H2O = (2E)-4-hydroxy-3-methylbut-2-enyl diphosphate + 2 reduced [2Fe-2S]-[ferredoxin] + 2 H(+). The catalysed reaction is dimethylallyl diphosphate + 2 oxidized [2Fe-2S]-[ferredoxin] + H2O = (2E)-4-hydroxy-3-methylbut-2-enyl diphosphate + 2 reduced [2Fe-2S]-[ferredoxin] + 2 H(+). It participates in isoprenoid biosynthesis; dimethylallyl diphosphate biosynthesis; dimethylallyl diphosphate from (2E)-4-hydroxy-3-methylbutenyl diphosphate: step 1/1. It functions in the pathway isoprenoid biosynthesis; isopentenyl diphosphate biosynthesis via DXP pathway; isopentenyl diphosphate from 1-deoxy-D-xylulose 5-phosphate: step 6/6. Its function is as follows. Catalyzes the conversion of 1-hydroxy-2-methyl-2-(E)-butenyl 4-diphosphate (HMBPP) into a mixture of isopentenyl diphosphate (IPP) and dimethylallyl diphosphate (DMAPP). Acts in the terminal step of the DOXP/MEP pathway for isoprenoid precursor biosynthesis. The sequence is that of 4-hydroxy-3-methylbut-2-enyl diphosphate reductase from Phocaeicola vulgatus (strain ATCC 8482 / DSM 1447 / JCM 5826 / CCUG 4940 / NBRC 14291 / NCTC 11154) (Bacteroides vulgatus).